We begin with the raw amino-acid sequence, 557 residues long: Dihydroxy-acid dehydratase (557 aa).

Residue Asp-78 coordinates Mg(2+). Residue Cys-119 coordinates [2Fe-2S] cluster. Mg(2+) is bound by residues Asp-120 and Lys-121. N6-carboxylysine is present on Lys-121. Cys-192 lines the [2Fe-2S] cluster pocket. Glu-443 lines the Mg(2+) pocket. Residue Ser-469 is the Proton acceptor of the active site.

It belongs to the IlvD/Edd family. Homodimer. The cofactor is [2Fe-2S] cluster. Requires Mg(2+) as cofactor.

It catalyses the reaction (2R)-2,3-dihydroxy-3-methylbutanoate = 3-methyl-2-oxobutanoate + H2O. The catalysed reaction is (2R,3R)-2,3-dihydroxy-3-methylpentanoate = (S)-3-methyl-2-oxopentanoate + H2O. It participates in amino-acid biosynthesis; L-isoleucine biosynthesis; L-isoleucine from 2-oxobutanoate: step 3/4. Its pathway is amino-acid biosynthesis; L-valine biosynthesis; L-valine from pyruvate: step 3/4. Functions in the biosynthesis of branched-chain amino acids. Catalyzes the dehydration of (2R,3R)-2,3-dihydroxy-3-methylpentanoate (2,3-dihydroxy-3-methylvalerate) into 2-oxo-3-methylpentanoate (2-oxo-3-methylvalerate) and of (2R)-2,3-dihydroxy-3-methylbutanoate (2,3-dihydroxyisovalerate) into 2-oxo-3-methylbutanoate (2-oxoisovalerate), the penultimate precursor to L-isoleucine and L-valine, respectively. In Sulfurihydrogenibium sp. (strain YO3AOP1), this protein is Dihydroxy-acid dehydratase.